We begin with the raw amino-acid sequence, 1488 residues long: Chromosome partition protein MukB (1488 aa).

Position 34–41 (34–41 (GGNGAGKS)) interacts with ATP. Coiled-coil stretches lie at residues 326–418 (LEAD…QYNQ), 444–472 (LDTF…QTAH), and 509–602 (RHLA…RRAP). A flexible hinge region spans residues 666–783 (PGGAEDQRLN…SLPIFGRAAR (118 aa)). 3 coiled-coil regions span residues 835-923 (EAEI…AKLE), 977-1116 (EMLS…AKAG), and 1209-1265 (VEAI…LQSV). Residues 1049–1074 (ADSGAEERARQRRDELHAQLSNNRSR) form a disordered region. Residues 1051 to 1065 (SGAEERARQRRDELH) show a composition bias toward basic and acidic residues.

Belongs to the SMC family. MukB subfamily. As to quaternary structure, homodimerization via its hinge domain. Binds to DNA via its C-terminal region. Interacts, and probably forms a ternary complex, with MukE and MukF via its C-terminal region. The complex formation is stimulated by calcium or magnesium. Interacts with tubulin-related protein FtsZ.

Its subcellular location is the cytoplasm. It localises to the nucleoid. Its function is as follows. Plays a central role in chromosome condensation, segregation and cell cycle progression. Functions as a homodimer, which is essential for chromosome partition. Involved in negative DNA supercoiling in vivo, and by this means organize and compact chromosomes. May achieve or facilitate chromosome segregation by condensation DNA from both sides of a centrally located replisome during cell division. This is Chromosome partition protein MukB from Salmonella heidelberg (strain SL476).